The sequence spans 233 residues: Pathogenesis-related thaumatin-like protein 3.2 (233 aa).

The N-terminal stretch at 1–22 (MARAMHTVWIALVPTLFVFLQG) is a signal peptide. 8 disulfide bridges follow: Cys-36/Cys-232, Cys-77/Cys-87, Cys-92/Cys-98, Cys-145/Cys-221, Cys-151/Cys-204, Cys-159/Cys-169, Cys-173/Cys-182, and Cys-183/Cys-191. A glycan (N-linked (GlcNAc...) asparagine) is linked at Asn-195.

Belongs to the thaumatin family. Strongly expressed in roots and in female and male strobili, and, to a lower extent, in cotyledons, leaves, stems and pollen grains.

Its function is as follows. May be involved in disease resistance. The chain is Pathogenesis-related thaumatin-like protein 3.2 from Cryptomeria japonica (Japanese cedar).